The primary structure comprises 1230 residues: Basic-leucine zipper transcription factor A (1230 aa).

Disordered regions lie at residues Leu-65–Asn-108, Leu-180–Gln-233, Gln-270–Gln-310, and His-422–Asp-578. 5 stretches are compositionally biased toward low complexity: residues Asn-69–Asn-108, Asn-192–Gln-233, Gln-270–Pro-287, Pro-295–Gln-310, and His-422–His-447. Composition is skewed to polar residues over residues Lys-448–Pro-458 and Thr-466–Gly-475. A compositionally biased stretch (low complexity) spans Ser-476 to Ser-503. Over residues Pro-523 to His-537 the composition is skewed to basic residues. Residues Phe-541–Glu-554 show a composition bias toward acidic residues. Residues Asp-555–Asp-618 enclose the bZIP domain. Positions Lys-556–Lys-586 are basic motif. The span at Arg-562–Asn-571 shows a compositional bias: polar residues. The leucine-zipper stretch occupies residues Leu-590 to Leu-604. A coiled-coil region spans residues Leu-728 to Ile-753. Disordered regions lie at residues Thr-772–Lys-869 and Asn-1025–Ile-1230. Composition is skewed to low complexity over residues Asn-774–Pro-803 and Asn-810–Asn-831. The span at Ser-832–Gly-845 shows a compositional bias: basic residues. Residues Asn-1025–Asn-1042 are compositionally biased toward polar residues. Composition is skewed to low complexity over residues Asn-1052–Asn-1146 and Gln-1153–Ser-1193.

It belongs to the bZIP family. Binds DNA as a dimer. Heterodimerizes with dimB; in vitro. Also able to form homodimer; in vitro.

It localises to the nucleus. In terms of biological role, transcriptional regulator involved in DIF-1 signaling. DIF-1 (Differentiation Inducing Factor-1) is a signal molecule involved in the differentiation of pstO (prestalk-O) cells. Functions both as an activator of prestalk gene expression and a repressor of prespore gene expression. The polypeptide is Basic-leucine zipper transcription factor A (dimA) (Dictyostelium discoideum (Social amoeba)).